The sequence spans 329 residues: Porphobilinogen deaminase (329 aa).

Cys-250 is modified (S-(dipyrrolylmethanemethyl)cysteine).

It belongs to the HMBS family. As to quaternary structure, monomer. Dipyrromethane serves as cofactor.

The enzyme catalyses 4 porphobilinogen + H2O = hydroxymethylbilane + 4 NH4(+). The protein operates within porphyrin-containing compound metabolism; protoporphyrin-IX biosynthesis; coproporphyrinogen-III from 5-aminolevulinate: step 2/4. In terms of biological role, tetrapolymerization of the monopyrrole PBG into the hydroxymethylbilane pre-uroporphyrinogen in several discrete steps. This chain is Porphobilinogen deaminase, found in Burkholderia mallei (strain NCTC 10247).